Reading from the N-terminus, the 260-residue chain is Ubiquinone/menaquinone biosynthesis C-methyltransferase UbiE (260 aa).

S-adenosyl-L-methionine-binding positions include Thr83, Asp104, and 132–133; that span reads NA.

The protein belongs to the class I-like SAM-binding methyltransferase superfamily. MenG/UbiE family.

It carries out the reaction a 2-demethylmenaquinol + S-adenosyl-L-methionine = a menaquinol + S-adenosyl-L-homocysteine + H(+). The catalysed reaction is a 2-methoxy-6-(all-trans-polyprenyl)benzene-1,4-diol + S-adenosyl-L-methionine = a 5-methoxy-2-methyl-3-(all-trans-polyprenyl)benzene-1,4-diol + S-adenosyl-L-homocysteine + H(+). Its pathway is quinol/quinone metabolism; menaquinone biosynthesis; menaquinol from 1,4-dihydroxy-2-naphthoate: step 2/2. It functions in the pathway cofactor biosynthesis; ubiquinone biosynthesis. In terms of biological role, methyltransferase required for the conversion of demethylmenaquinol (DMKH2) to menaquinol (MKH2) and the conversion of 2-polyprenyl-6-methoxy-1,4-benzoquinol (DDMQH2) to 2-polyprenyl-3-methyl-6-methoxy-1,4-benzoquinol (DMQH2). The protein is Ubiquinone/menaquinone biosynthesis C-methyltransferase UbiE of Bartonella henselae (strain ATCC 49882 / DSM 28221 / CCUG 30454 / Houston 1) (Rochalimaea henselae).